Consider the following 69-residue polypeptide: Dodecin (69 aa).

Residue 3–5 participates in FMN binding; it reads KVY. Residues K6, R28, and 32 to 34 each bind CoA; that span reads TLR. FMN-binding residues include D37, W38, R45, Q57, and R65. 65 to 67 is a CoA binding site; it reads RLE.

This sequence belongs to the dodecin family. As to quaternary structure, homododecamer; four homotrimers assemble to form a dodecameric hollow sphere with an outer diameter of about 60 Angstroms. Flavin dimers are bound between subunits with a stoichiometry of 6 flavin dimers per dodecamer. Besides, trimeric coenzyme A molecules can be bound between subunits. A dodecamer can bind simultaneously 12 flavin and 12 coenzyme A molecules.

Its function is as follows. May function as storage protein that sequesters various flavins and other cofactors, thereby protecting the cell against undesirable reactions mediated by the free cofactors. Binds and sequesters FMN, FAD, lumiflavin and lumichrome, and can also bind coenzyme A. The chain is Dodecin from Thermus thermophilus (strain ATCC 27634 / DSM 579 / HB8).